Consider the following 105-residue polypeptide: Heat shock protein HspQ (105 aa).

Belongs to the HspQ family.

The protein localises to the cytoplasm. Involved in the degradation of certain denaturated proteins, including DnaA, during heat shock stress. This Blochmanniella pennsylvanica (strain BPEN) protein is Heat shock protein HspQ.